The chain runs to 598 residues: Beta-myrcene/(E)-beta-ocimene synthase 2, chloroplastic (598 aa).

The transit peptide at 1 to 30 (MATLCIGSAPIYQNACIHNFRLQRPRRFIS) directs the protein to the chloroplast. Residues Arg-307, Asp-344, Asp-348, Arg-486, and Asn-489 each contribute to the (2E)-geranyl diphosphate site. Mg(2+) is bound by residues Asp-344 and Asp-348. Positions 344–348 (DDIYD) match the DDXXD motif motif. The Mg(2+) site is built by Asn-489, Thr-493, and Glu-497.

This sequence belongs to the terpene synthase family. Tpsb subfamily. Mg(2+) serves as cofactor. The cofactor is Mn(2+). In terms of tissue distribution, expressed exclusively in mature flowers, but not in inmmature buds.

Its subcellular location is the plastid. The protein resides in the chloroplast. The enzyme catalyses (2E)-geranyl diphosphate = beta-myrcene + diphosphate. It functions in the pathway secondary metabolite biosynthesis; terpenoid biosynthesis. Involved in monoterpene (C10) biosynthesis. The major products are alpha- and beta-pinene, sabinene, beta-myrcene, (E)-beta-ocimene and limonene. The sequence is that of Beta-myrcene/(E)-beta-ocimene synthase 2, chloroplastic (TPS24) from Arabidopsis thaliana (Mouse-ear cress).